A 356-amino-acid polypeptide reads, in one-letter code: Neutral protease 2 homolog MEP5 (356 aa).

The signal sequence occupies residues 1–19; the sequence is MRVSSSLIALAALAVQALA. Residues 20 to 179 constitute a propeptide that is removed on maturation; that stretch reads LPVNELAERD…ASAIPELDKR (160 aa). Cystine bridges form between Cys-187–Cys-259 and Cys-266–Cys-284. His-308 serves as a coordination point for Zn(2+). The active site involves Glu-309. Residues His-312 and Asp-323 each coordinate Zn(2+).

This sequence belongs to the peptidase M35 family. The cofactor is Zn(2+).

Its subcellular location is the secreted. It catalyses the reaction Preferential cleavage of bonds with hydrophobic residues in P1'. Also 3-Asn-|-Gln-4 and 8-Gly-|-Ser-9 bonds in insulin B chain.. Functionally, secreted metalloproteinase that allows assimilation of proteinaceous substrates. Shows high activities on basic nuclear substrates such as histone and protamine. May be involved in virulence. The chain is Neutral protease 2 homolog MEP5 (MEP5) from Coccidioides posadasii (strain C735) (Valley fever fungus).